The primary structure comprises 860 residues: Tetratricopeptide repeat protein 13 (860 aa).

TPR repeat units lie at residues 143–176 (TNEE…EPDL), 216–248 (PEVF…LQPS), 249–282 (ARLY…NKNQ), 284–316 (IAML…KVDF), 317–350 (IDAY…NQNH), 352–384 (QTLQ…EPYN), and 386–418 (VCQY…DPLP).

In Homo sapiens (Human), this protein is Tetratricopeptide repeat protein 13 (TTC13).